A 257-amino-acid polypeptide reads, in one-letter code: Phosphonates import ATP-binding protein PhnC (257 aa).

The region spanning 4-248 (IEFKDVNKVY…VFNDIYGRKL (245 aa)) is the ABC transporter domain. 37 to 44 (GLSGAGKS) is a binding site for ATP.

Belongs to the ABC transporter superfamily. Phosphonates importer (TC 3.A.1.9.1) family. The complex is composed of two ATP-binding proteins (PhnC), two transmembrane proteins (PhnE) and a solute-binding protein (PhnD).

It localises to the cell membrane. The catalysed reaction is phosphonate(out) + ATP + H2O = phosphonate(in) + ADP + phosphate + H(+). Part of the ABC transporter complex PhnCDE involved in phosphonates import. Responsible for energy coupling to the transport system. The polypeptide is Phosphonates import ATP-binding protein PhnC (Staphylococcus haemolyticus (strain JCSC1435)).